A 103-amino-acid polypeptide reads, in one-letter code: uncharacterized protein (103 aa).

Residues 1 to 103 form a disordered region; sequence MAGARRRARC…WRGGSCTSQR (103 aa). Basic residues-rich tracts occupy residues 55 to 65 and 74 to 84; these read RRPGPGRRARS and RPPHSRTRARR.

This sequence belongs to the epstein-barr virus RPMS1 family.

This is an uncharacterized protein from Epstein-Barr virus (strain GD1) (HHV-4).